Consider the following 470-residue polypeptide: Histidine--tRNA ligase (470 aa).

Belongs to the class-II aminoacyl-tRNA synthetase family. As to quaternary structure, homodimer.

Its subcellular location is the cytoplasm. The enzyme catalyses tRNA(His) + L-histidine + ATP = L-histidyl-tRNA(His) + AMP + diphosphate + H(+). The chain is Histidine--tRNA ligase from Xanthomonas oryzae pv. oryzae (strain PXO99A).